The chain runs to 186 residues: Large ribosomal subunit protein bL17 (186 aa).

Residues 123–186 (SEADRARRVK…ADEAEGSSED (64 aa)) are disordered. Residues 139–177 (EAAAAAPQAAVEPEAVEAAPAPDAPEAAPEAEAAAPQPA) are compositionally biased toward low complexity.

This sequence belongs to the bacterial ribosomal protein bL17 family. Part of the 50S ribosomal subunit. Contacts protein L32.

This chain is Large ribosomal subunit protein bL17, found in Mycobacterium avium (strain 104).